Reading from the N-terminus, the 106-residue chain is ATP-dependent Clp protease adapter protein ClpS (106 aa).

This sequence belongs to the ClpS family. In terms of assembly, binds to the N-terminal domain of the chaperone ClpA.

Functionally, involved in the modulation of the specificity of the ClpAP-mediated ATP-dependent protein degradation. This chain is ATP-dependent Clp protease adapter protein ClpS, found in Aliivibrio fischeri (strain ATCC 700601 / ES114) (Vibrio fischeri).